The following is a 125-amino-acid chain: SOSS complex subunit C homolog A (125 aa).

Over residues 1–16 (MAFPNTSAQQAETNSK) the composition is skewed to polar residues. Disordered regions lie at residues 1–20 (MAFPNTSAQQAETNSKSLEE), 38–74 (SNTNQMPAPQLLGQPSTTTATPDLVSTNSTPPRAAFN), and 105–125 (PATPSTTTPPITPIANANNPK).

Belongs to the SOSS-C family.

This chain is SOSS complex subunit C homolog A, found in Drosophila willistoni (Fruit fly).